Here is a 710-residue protein sequence, read N- to C-terminus: F-box only protein 40 (710 aa).

The TRAF-type zinc finger occupies 53–114 (EHTLLCPLEQ…VDSETFLHEN (62 aa)). Disordered regions lie at residues 152–174 (DATE…GAVG) and 234–279 (GSLG…SQEL). Positions 238–248 (KSEDKNGDVAG) are enriched in basic and acidic residues. Positions 572 to 626 (LNSLTSLPLEVLQYIAGFLDSISLSQLSQVSVLMRNICATLLQERGMVLSQWKKK) constitute an F-box domain.

In terms of assembly, directly interacts with SKP1 and CUL1. In terms of tissue distribution, expressed only in heart and skeletal muscle.

Its subcellular location is the cytoplasm. Functionally, probable substrate-recognition component of the SCF (SKP1-CUL1-F-box protein)-type E3 ubiquitin ligase complex that may function in myogenesis. The polypeptide is F-box only protein 40 (Fbxo40) (Mus musculus (Mouse)).